We begin with the raw amino-acid sequence, 239 residues long: MAKLAVNVDHVATLRQARGAAYPEPAAAALAAEAAGADAIVVHLREDRRHINERDVRVIKEVIRTRLILEMAATPKMLGIALSLKPHTVTLVPEKREEITTEGGLDLINHHSSIKQTVEALKNAGIMVSIFIDPDLDQIKMAHRIDADMIEIHTGAFCDAVNEHQRQREFTRIVDAAKIGTRLKLSVNAGHGICYNTIKAFQGLDEIDEFSIGHSIVARAVLTGMDRAVRDMLALIRAL.

Residue N7 coordinates 3-amino-2-oxopropyl phosphate. 9–10 (DH) contacts 1-deoxy-D-xylulose 5-phosphate. R18 lines the 3-amino-2-oxopropyl phosphate pocket. Residue H43 is the Proton acceptor of the active site. 2 residues coordinate 1-deoxy-D-xylulose 5-phosphate: R45 and H50. E70 serves as the catalytic Proton acceptor. T100 provides a ligand contact to 1-deoxy-D-xylulose 5-phosphate. H191 functions as the Proton donor in the catalytic mechanism. 3-amino-2-oxopropyl phosphate contacts are provided by residues G192 and 213-214 (GH).

The protein belongs to the PNP synthase family. Homooctamer; tetramer of dimers.

The protein localises to the cytoplasm. It carries out the reaction 3-amino-2-oxopropyl phosphate + 1-deoxy-D-xylulose 5-phosphate = pyridoxine 5'-phosphate + phosphate + 2 H2O + H(+). Its pathway is cofactor biosynthesis; pyridoxine 5'-phosphate biosynthesis; pyridoxine 5'-phosphate from D-erythrose 4-phosphate: step 5/5. In terms of biological role, catalyzes the complicated ring closure reaction between the two acyclic compounds 1-deoxy-D-xylulose-5-phosphate (DXP) and 3-amino-2-oxopropyl phosphate (1-amino-acetone-3-phosphate or AAP) to form pyridoxine 5'-phosphate (PNP) and inorganic phosphate. The protein is Pyridoxine 5'-phosphate synthase of Desulforapulum autotrophicum (strain ATCC 43914 / DSM 3382 / VKM B-1955 / HRM2) (Desulfobacterium autotrophicum).